The following is a 143-amino-acid chain: Large ribosomal subunit protein uL13 (143 aa).

Belongs to the universal ribosomal protein uL13 family. Part of the 50S ribosomal subunit.

This protein is one of the early assembly proteins of the 50S ribosomal subunit, although it is not seen to bind rRNA by itself. It is important during the early stages of 50S assembly. This Carboxydothermus hydrogenoformans (strain ATCC BAA-161 / DSM 6008 / Z-2901) protein is Large ribosomal subunit protein uL13.